We begin with the raw amino-acid sequence, 582 residues long: uncharacterized protein (582 aa).

6 helical membrane-spanning segments follow: residues 17–37, 57–77, 131–151, 156–176, 239–259, and 271–291; these read VAML…LPTV, LGAV…GAVY, MTAT…IMAI, ALTW…YWII, ALML…LIWF, and VGSL…VLMA. The ABC transmembrane type-1 domain occupies 17 to 300; the sequence is VAMLMMLQLV…ATMTLAVLPR (284 aa). Residues 335-571 enclose the ABC transporter domain; the sequence is VRLAGATFTY…CPTYAEFAAS (237 aa). Residue 369 to 376 participates in ATP binding; sequence GSTGSGKS.

The protein belongs to the ABC transporter superfamily.

Its subcellular location is the cell membrane. This is an uncharacterized protein from Mycobacterium tuberculosis (strain CDC 1551 / Oshkosh).